Here is a 122-residue protein sequence, read N- to C-terminus: Large ribosomal subunit protein bL12 (122 aa).

This sequence belongs to the bacterial ribosomal protein bL12 family. Homodimer. Part of the ribosomal stalk of the 50S ribosomal subunit. Forms a multimeric L10(L12)X complex, where L10 forms an elongated spine to which 2 to 4 L12 dimers bind in a sequential fashion. Binds GTP-bound translation factors.

Functionally, forms part of the ribosomal stalk which helps the ribosome interact with GTP-bound translation factors. Is thus essential for accurate translation. The chain is Large ribosomal subunit protein bL12 from Buchnera aphidicola subsp. Schizaphis graminum (strain Sg).